The primary structure comprises 138 residues: Acidic phospholipase A2 Tpu-E6a (138 aa).

An N-terminal signal peptide occupies residues 1 to 16 (MRTLWIMAVLLLGVKG). 7 disulfide bridges follow: C42-C131, C44-C60, C59-C111, C65-C138, C66-C104, C73-C97, and C91-C102. Positions 43, 45, and 47 each coordinate Ca(2+). H63 is an active-site residue. D64 lines the Ca(2+) pocket. D105 is a catalytic residue.

Monomer. The cofactor is Ca(2+). In terms of tissue distribution, expressed by the venom gland.

Its subcellular location is the secreted. It catalyses the reaction a 1,2-diacyl-sn-glycero-3-phosphocholine + H2O = a 1-acyl-sn-glycero-3-phosphocholine + a fatty acid + H(+). Snake venom phospholipase A2 (PLA2) that impairs hemostasis. It weakly inhibits ADP-induced platelet aggregation when tested on platelet rich plasma from human and rabbit blood (15-25% of inhibition at 5-10 ug of enzyme), and dose-dependently inhibits blood coagulation, possibly by inhibiting thrombin activation. Exhibits high hydrolytic activities toward L-dipalmitoyl phosphatidylcholine. PLA2 catalyzes the calcium-dependent hydrolysis of the 2-acyl groups in 3-sn-phosphoglycerides. This Craspedocephalus puniceus (Flat-nosed pitviper) protein is Acidic phospholipase A2 Tpu-E6a.